The primary structure comprises 62 residues: MKLNDKELSKIVGGNRWGDTVLSAASGAGTGIKACKSFGPWGMAICGVGGAAIGGYFGYTHN.

A propeptide spanning residues 1–14 (MKLNDKELSKIVGG) is cleaved from the precursor.

Belongs to the bacteriocin class IIB family. This bacteriocin depends upon the complementation of two peptides for activity: LafA and LafX. Associated with a 180 kDa bacteriocin complex.

Its function is as follows. Heat stable bacteriocin active against Enterococcus faecalis and other Lactobacilli. This is Bacteriocin lactacin-F subunit LafX (lafX) from Lactobacillus johnsonii (strain CNCM I-12250 / La1 / NCC 533).